Reading from the N-terminus, the 371-residue chain is Phosphate acyltransferase (371 aa).

It belongs to the PlsX family. Homodimer. Probably interacts with PlsY.

Its subcellular location is the cytoplasm. It carries out the reaction a fatty acyl-[ACP] + phosphate = an acyl phosphate + holo-[ACP]. The protein operates within lipid metabolism; phospholipid metabolism. Its function is as follows. Catalyzes the reversible formation of acyl-phosphate (acyl-PO(4)) from acyl-[acyl-carrier-protein] (acyl-ACP). This enzyme utilizes acyl-ACP as fatty acyl donor, but not acyl-CoA. This Polaromonas sp. (strain JS666 / ATCC BAA-500) protein is Phosphate acyltransferase.